The chain runs to 248 residues: 3-deoxy-manno-octulosonate cytidylyltransferase (248 aa).

The protein belongs to the KdsB family.

The protein localises to the cytoplasm. The catalysed reaction is 3-deoxy-alpha-D-manno-oct-2-ulosonate + CTP = CMP-3-deoxy-beta-D-manno-octulosonate + diphosphate. The protein operates within nucleotide-sugar biosynthesis; CMP-3-deoxy-D-manno-octulosonate biosynthesis; CMP-3-deoxy-D-manno-octulosonate from 3-deoxy-D-manno-octulosonate and CTP: step 1/1. It participates in bacterial outer membrane biogenesis; lipopolysaccharide biosynthesis. Its function is as follows. Activates KDO (a required 8-carbon sugar) for incorporation into bacterial lipopolysaccharide in Gram-negative bacteria. The polypeptide is 3-deoxy-manno-octulosonate cytidylyltransferase (Chlorobium phaeobacteroides (strain BS1)).